The following is a 408-amino-acid chain: Probable 2,3-bisphosphoglycerate-independent phosphoglycerate mutase (408 aa).

It belongs to the BPG-independent phosphoglycerate mutase family. A-PGAM subfamily.

The catalysed reaction is (2R)-2-phosphoglycerate = (2R)-3-phosphoglycerate. Its pathway is carbohydrate degradation; glycolysis; pyruvate from D-glyceraldehyde 3-phosphate: step 3/5. Its function is as follows. Catalyzes the interconversion of 2-phosphoglycerate and 3-phosphoglycerate. The chain is Probable 2,3-bisphosphoglycerate-independent phosphoglycerate mutase from Deinococcus geothermalis (strain DSM 11300 / CIP 105573 / AG-3a).